A 373-amino-acid chain; its full sequence is Peptidoglycan recognition protein 4 (373 aa).

The first 17 residues, 1 to 17, serve as a signal peptide directing secretion; that stretch reads MLPWLLVFSALGIQAWG. 5 N-linked (GlcNAc...) asparagine glycosylation sites follow: Asn22, Asn39, Asn109, Asn145, and Asn247. N-acetylmuramoyl-L-alanine amidase domains are found at residues 74–212 and 235–358; these read TPVN…ACPG and YGII…LSPG. Intrachain disulfides connect Cys210–Cys332, Cys226–Cys270, and Cys246–Cys252. Peptidoglycan contacts are provided by Tyr263 and Tyr274. 2 interaction with murein regions span residues 293–302 and 353–354; these read QGSSTPGYDD and RT.

The protein belongs to the N-acetylmuramoyl-L-alanine amidase 2 family. In terms of assembly, homodimer; disulfide-linked. Heterodimer with PGLYRP3; disulfide-linked. Post-translationally, N-glycosylated. As to expression, detected in skin epidermis, eccrine sweat glands and ducts, mucous cells in the submandibular salivary gland, mucous cells in the throat, ciliary body epithelial cells of the eye, small intestine, colon, stomach and in mature epithelial cells of the tongue (at protein level). High expression in skin and esophagus. Expressed also to a much lesser extent in the tonsils and thymus.

Its subcellular location is the secreted. Functionally, pattern receptor that binds to murein peptidoglycans (PGN) of Gram-positive bacteria. Has bactericidal activity towards Gram-positive bacteria. May kill Gram-positive bacteria by interfering with peptidoglycan biosynthesis. Also binds to Gram-negative bacteria, and has bacteriostatic activity towards Gram-negative bacteria. Plays a role in innate immunity. The sequence is that of Peptidoglycan recognition protein 4 (PGLYRP4) from Homo sapiens (Human).